A 2083-amino-acid chain; its full sequence is Centriole proteome protein 16 (2083 aa).

The tract at residues 205–333 (DAPTMDFMPP…PAVPPPLSPS (129 aa)) is disordered. Low complexity predominate over residues 227-245 (TAETADTAGAAGRKSLSGA). Positions 246 to 258 (SAGGAGPAKGGAK) are enriched in gly residues. Low complexity-rich tracts occupy residues 259-274 (AGAAAGGKRAVSSAGA) and 283-292 (GSTAGAATPG). Positions 302–315 (GEEDFEDDLSEDLD) are enriched in acidic residues. Over residues 319 to 331 (PLPPSPAVPPPLS) the composition is skewed to pro residues. 10 WD repeats span residues 482–523 (GHTA…CLAI), 526–569 (AHAS…AAGG), 579–620 (ATEY…GTSV), 689–726 (LHAAAINCLVVSDGLVLTGGDDRLLRAWPLDFRDYLLE), 728–767 (EHEGAVTGLAMSTDALRLAVGTENGTLGVLAIPTHAYTTL), 770–809 (SHCGAVNAVAVDPNRDQYCTVSSDGTLRIWHLATHQQLYE), 812–853 (APGE…LLQE), 856–895 (QHRAGITELLFSPGGDRLFSGGADGALVVYDTARMYAPAQ), 990–1029 (VSPLELTALCLDPAGRYAATAGADGLLRLWGCVPLPALRG), and 1041–1079 (GHPSAILGAAFHRSGYLVTVGDADCVCVWRVNADHMQQE). Disordered stretches follow at residues 1113–1141 (HTQATGALDPTDPRSRAHPSTALGPVASA) and 1225–1276 (ALVV…PPPP). Over residues 1263-1276 (VPLPPSPQPLPPPP) the composition is skewed to pro residues. WD repeat units follow at residues 1326–1365 (GHNRPLSCLAASPDGALVAAGPAAAEPAFTEPAAGARAAQ), 1403–1444 (YHPL…LVAA), 1448–1486 (EQSPRAAAWLWGGHNPAFATAGADGLLLWTLQDNFLEQR), 1497–1539 (RDPR…QPPQ), 1651–1691 (GQAA…AEPA), 1736–1781 (DPLD…QLSW), and 1785–1824 (RHPAPVVGVAPHPRRGLVLSASSDGSLAVTDLSSTRLVSY). Residues 1713–1743 (APAHTLRHPPSAAPSSAASSSPLDPLDPLPA) are disordered. A compositionally biased stretch (low complexity) spans 1720-1743 (HPPSAAPSSAASSSPLDPLDPLPA). The disordered stretch occupies residues 1832 to 1870 (GPTPHSPGGTGRRSPRGAASPPPAPPRPGTGPLQAMAVS). Over residues 1851 to 1860 (SPPPAPPRPG) the composition is skewed to pro residues. One copy of the WD 18 repeat lies at 2035-2073 (GHAGAVAAASYTGDGGHAVTASGSVLMVWDAAQLLKGVT).

It belongs to the WD repeat WDR90/POC16 family.

Its subcellular location is the cytoplasm. It localises to the cytoskeleton. The protein localises to the microtubule organizing center. It is found in the centrosome. The protein resides in the centriole. Functionally, required for flagellum assembly and/or maintenance. The polypeptide is Centriole proteome protein 16 (Chlamydomonas reinhardtii (Chlamydomonas smithii)).